The sequence spans 140 residues: Profilin-2 (140 aa).

The residue at position 2 (alanine 2) is an N-acetylalanine.

The protein belongs to the profilin family. In terms of assembly, occurs in many kinds of cells as a complex with monomeric actin in a 1:1 ratio. Interacts with PFN2. Interacts with ACTMAP (via N-terminus); the interaction may facilitate efficient cleavage of the acetylated N-terminus of immature actin by ACTMAP.

The protein resides in the cytoplasm. It is found in the cytoskeleton. In terms of biological role, binds to actin and affects the structure of the cytoskeleton. At high concentrations, profilin prevents the polymerization of actin, whereas it enhances it at low concentrations. By binding to PIP2, it inhibits the formation of IP3 and DG. This Rattus norvegicus (Rat) protein is Profilin-2 (Pfn2).